Here is an 802-residue protein sequence, read N- to C-terminus: Endoplasmin (802 aa).

The signal sequence occupies residues 1–21 (MRALWVLGLCCVLLTFGSARA). An SRT pseudosubstrate motif motif is present at residues 42-44 (SRT). An N-linked (GlcNAc...) asparagine glycan is attached at N62. S64 is subject to Phosphoserine. Residue N107 is glycosylated (N-linked (GlcNAc...) asparagine). ATP contacts are provided by N107, D149, and N162. Residue K168 is modified to N6-(2-hydroxyisobutyryl)lysine. A Phosphoserine modification is found at S172. F199 is a binding site for ATP. Residue N217 is glycosylated (N-linked (GlcNAc...) asparagine). The interval 288–323 (TVEEPAEEEEAAKEEKEEADDEAAVEEEEEEKKPKT) is disordered. Positions 289–317 (VEEPAEEEEAAKEEKEEADDEAAVEEEEE) are enriched in acidic residues. S403 bears the Phosphoserine mark. An N6-succinyllysine modification is found at K404. Residue N445 is glycosylated (N-linked (GlcNAc...) asparagine). Position 447 is a phosphoserine (S447). At K479 the chain carries N6-acetyllysine. 2 N-linked (GlcNAc...) asparagine glycosylation sites follow: N481 and N502. N6-succinyllysine is present on K633. The disordered stretch occupies residues 750–802 (DPDAKVEEEPEEEPEDTTEDTEQDEEEEMDAGTDEEEQEQEPEKKSTAEKDEL). A compositionally biased stretch (acidic residues) spans 757–789 (EEPEEEPEDTTEDTEQDEEEEMDAGTDEEEQEQ). T782 is modified (phosphothreonine). The span at 790 to 802 (EPEKKSTAEKDEL) shows a compositional bias: basic and acidic residues. Residues 799–802 (KDEL) carry the Prevents secretion from ER motif.

The protein belongs to the heat shock protein 90 family. As to quaternary structure, homodimer; disulfide-linked. Component of an EIF2 complex at least composed of CELF1/CUGBP1, CALR, CALR3, EIF2S1, EIF2S2, HSP90B1 and HSPA5. Part of a large chaperone multiprotein complex comprising DNAJB11, HSP90B1, HSPA5, HYOU, PDIA2, PDIA4, PDIA6, PPIB, SDF2L1, UGGT1 and very small amounts of ERP29, but not, or at very low levels, CALR nor CANX. Interacts with AIMP1; regulates its retention in the endoplasmic reticulum. Hyperglycosylated form interacts with OS9; promoting its degradation by the endoplasmic reticulum associated degradation (ERAD). Interacts with CNPY3. This interaction is disrupted in the presence of ATP. Interacts with TLR4 and TLR9, but not with TLR3. Interacts with MZB1 in a calcium-dependent manner. Interacts with METTL23. Interacts with IL1B; the interaction facilitates cargo translocation into the ERGIC. Interacts with EIF2AK3. In terms of processing, phosphorylated by CK2. Post-translationally, N-glycosylated cotranslationally at Asn-217 by STT3A-containing OST-A complex: this glycosylation is constitutive. In response to various stress, 5 additional facultative sites (Asn-62, Asn-107, Asn-445, Asn-481 and Asn-502) can be glycosylated post-translationally by STT3B-containing OST-B complex, leading to a hyperglycosylated form that is degraded by the ER-associated degradation (ERAD) pathway. In normal conditions, the OST-A complex together with CCDC134 prevent glycosylation at facultative sites during protein folding, thereby preventing hyperglycosylation. Mechanistically, nascent HSP90B1 is tethered during translation to a specialized CCDC134-containing translocon that forms a microenvironment for its folding, in which STT3A associates with the SRT pseudosubstrate motif, and prevents access to facultative glycosylation sites until folding is completed, rendering its facultative sites inaccessible to the OST-B complex.

The protein localises to the endoplasmic reticulum lumen. The protein resides in the sarcoplasmic reticulum lumen. It localises to the melanosome. The catalysed reaction is ATP + H2O = ADP + phosphate + H(+). Its function is as follows. ATP-dependent chaperone involved in the processing of proteins in the endoplasmic reticulum, regulating their transport. Together with MESD, acts as a modulator of the Wnt pathway by promoting the folding of LRP6, a coreceptor of the canonical Wnt pathway. When associated with CNPY3, required for proper folding of Toll-like receptors. Promotes folding and trafficking of TLR4 to the cell surface. May participate in the unfolding of cytosolic leaderless cargos (lacking the secretion signal sequence) such as the interleukin 1/IL-1 to facilitate their translocation into the ERGIC (endoplasmic reticulum-Golgi intermediate compartment) and secretion; the translocation process is mediated by the cargo receptor TMED10. This is Endoplasmin (HSP90B1) from Oryctolagus cuniculus (Rabbit).